Here is a 331-residue protein sequence, read N- to C-terminus: Phenylalanine--tRNA ligase alpha subunit (331 aa).

E252 lines the Mg(2+) pocket.

Belongs to the class-II aminoacyl-tRNA synthetase family. Phe-tRNA synthetase alpha subunit type 1 subfamily. In terms of assembly, tetramer of two alpha and two beta subunits. Mg(2+) serves as cofactor.

It is found in the cytoplasm. It catalyses the reaction tRNA(Phe) + L-phenylalanine + ATP = L-phenylalanyl-tRNA(Phe) + AMP + diphosphate + H(+). The sequence is that of Phenylalanine--tRNA ligase alpha subunit from Xanthomonas oryzae pv. oryzae (strain MAFF 311018).